Consider the following 656-residue polypeptide: Threonine--tRNA ligase (656 aa).

Residues 1-63 (MAEIQLTFPD…LEDGAIEIIT (63 aa)) form the TGS domain. Positions 243 to 541 (DHRVIGNQLD…LTEIYKGAFP (299 aa)) are catalytic. Zn(2+) contacts are provided by C337, H388, and H518.

Belongs to the class-II aminoacyl-tRNA synthetase family. Homodimer. The cofactor is Zn(2+).

Its subcellular location is the cytoplasm. It catalyses the reaction tRNA(Thr) + L-threonine + ATP = L-threonyl-tRNA(Thr) + AMP + diphosphate + H(+). Catalyzes the attachment of threonine to tRNA(Thr) in a two-step reaction: L-threonine is first activated by ATP to form Thr-AMP and then transferred to the acceptor end of tRNA(Thr). Also edits incorrectly charged L-seryl-tRNA(Thr). The polypeptide is Threonine--tRNA ligase (Latilactobacillus sakei subsp. sakei (strain 23K) (Lactobacillus sakei subsp. sakei)).